Reading from the N-terminus, the 156-residue chain is MPRRREVPKREILPDPKFGSVELAKFMNVVMLDGKKAVAERIVYGALEQVQAKTGKEPIEVFSLAINNIKPIVEVKSRRVGGANYQVPVEVRPVRRLALAMRWLREAAKKRGEKSMDLRLAGELIDASEGRGAAMKKREDTHKMAEANKAFSHFRW.

It belongs to the universal ribosomal protein uS7 family. In terms of assembly, part of the 30S ribosomal subunit. Contacts proteins S9 and S11.

In terms of biological role, one of the primary rRNA binding proteins, it binds directly to 16S rRNA where it nucleates assembly of the head domain of the 30S subunit. Is located at the subunit interface close to the decoding center, probably blocks exit of the E-site tRNA. This Bordetella petrii (strain ATCC BAA-461 / DSM 12804 / CCUG 43448) protein is Small ribosomal subunit protein uS7.